A 78-amino-acid polypeptide reads, in one-letter code: Acyl carrier protein (78 aa).

Positions 2–77 constitute a Carrier domain; that stretch reads SDIAERVKKI…DAIKFLEKNA (76 aa). Ser37 is subject to O-(pantetheine 4'-phosphoryl)serine.

The protein belongs to the acyl carrier protein (ACP) family. 4'-phosphopantetheine is transferred from CoA to a specific serine of apo-ACP by AcpS. This modification is essential for activity because fatty acids are bound in thioester linkage to the sulfhydryl of the prosthetic group.

Its subcellular location is the cytoplasm. It participates in lipid metabolism; fatty acid biosynthesis. Its function is as follows. Carrier of the growing fatty acid chain in fatty acid biosynthesis. The sequence is that of Acyl carrier protein from Xanthobacter autotrophicus (strain ATCC BAA-1158 / Py2).